Reading from the N-terminus, the 574-residue chain is Pre-mRNA-processing protein 45 (574 aa).

Disordered regions lie at residues 1–46, 203–234, 350–406, 478–503, and 549–574; these read MAAL…WKPK, PPRF…TAQD, ETGI…SEMR, AGSS…SKDR, and MDAA…ARDE. Composition is skewed to pro residues over residues 24-33 and 215-224; these read APLPTTPGPQ and PAEPPPPVLQ. Over residues 363-377 the composition is skewed to acidic residues; sequence GSEEESDEEEEDEEA. 3 stretches are compositionally biased toward basic and acidic residues: residues 378–397, 493–503, and 558–574; these read IRER…KEMR, EGIKEEMSKDR, and RTAE…ARDE.

The protein belongs to the SNW family. Associated with the spliceosome.

It localises to the nucleus. In terms of biological role, involved in pre-mRNA splicing. The chain is Pre-mRNA-processing protein 45 (PRP45) from Cryptococcus neoformans var. neoformans serotype D (strain JEC21 / ATCC MYA-565) (Filobasidiella neoformans).